Here is a 305-residue protein sequence, read N- to C-terminus: U6 small nuclear RNA (adenine-(43)-N(6))-methyltransferase (305 aa).

The S-adenosyl-L-methionine site is built by arginine 85, glycine 110, glutamate 133, serine 164, and asparagine 186. The segment at 194 to 217 (SPNPFGGNTRNPQRRPAPNNVRTG) is disordered.

The protein belongs to the methyltransferase superfamily. METTL16/RlmF family.

The catalysed reaction is adenosine in U6 snRNA + S-adenosyl-L-methionine = N(6)-methyladenosine in U6 snRNA + S-adenosyl-L-homocysteine + H(+). Functionally, RNA N6-methyltransferase that mediates N6-methylation of adenine of U6 small nuclear RNA (U6 snRNA). This Drosophila pseudoobscura pseudoobscura (Fruit fly) protein is U6 small nuclear RNA (adenine-(43)-N(6))-methyltransferase.